A 283-amino-acid polypeptide reads, in one-letter code: Pantothenate synthetase (283 aa).

An ATP-binding site is contributed by 26-33; it reads MGNLHEGH. The Proton donor role is filled by H33. Residue Q57 participates in (R)-pantoate binding. Q57 provides a ligand contact to beta-alanine. An ATP-binding site is contributed by 144–147; it reads GKKD. Q150 contributes to the (R)-pantoate binding site. ATP contacts are provided by residues V173 and 181-184; that span reads LSSR.

This sequence belongs to the pantothenate synthetase family. As to quaternary structure, homodimer.

It localises to the cytoplasm. The catalysed reaction is (R)-pantoate + beta-alanine + ATP = (R)-pantothenate + AMP + diphosphate + H(+). Its pathway is cofactor biosynthesis; (R)-pantothenate biosynthesis; (R)-pantothenate from (R)-pantoate and beta-alanine: step 1/1. Functionally, catalyzes the condensation of pantoate with beta-alanine in an ATP-dependent reaction via a pantoyl-adenylate intermediate. The polypeptide is Pantothenate synthetase (Ralstonia nicotianae (strain ATCC BAA-1114 / GMI1000) (Ralstonia solanacearum)).